We begin with the raw amino-acid sequence, 241 residues long: 3-oxoacyl-[acyl-carrier-protein] reductase FabG (241 aa).

Residues 13-16 (GASG), S38, 57-58 (EV), and N83 each bind NADP(+). Residue S135 participates in substrate binding. The active-site Proton acceptor is the Y148. NADP(+)-binding positions include 148–152 (YCASK) and I181.

This sequence belongs to the short-chain dehydrogenases/reductases (SDR) family. Homotetramer.

The catalysed reaction is a (3R)-hydroxyacyl-[ACP] + NADP(+) = a 3-oxoacyl-[ACP] + NADPH + H(+). Its pathway is lipid metabolism; fatty acid biosynthesis. Its function is as follows. Catalyzes the NADPH-dependent reduction of beta-ketoacyl-ACP substrates to beta-hydroxyacyl-ACP products, the first reductive step in the elongation cycle of fatty acid biosynthesis. The chain is 3-oxoacyl-[acyl-carrier-protein] reductase FabG (fabG) from Rickettsia typhi (strain ATCC VR-144 / Wilmington).